A 387-amino-acid polypeptide reads, in one-letter code: Protein TsgA homolog (387 aa).

The next 12 membrane-spanning stretches (helical) occupy residues 11–31, 47–67, 76–96, 101–121, 134–154, 160–180, 205–225, 243–263, 271–291, 299–319, 331–351, and 358–378; these read WISFFSYAFTGALIVITGMIM, NIFTFLNAGILISIFLNSWLI, LIFGFLFSIIAILGIVFSTSI, INIFILGLVSGITMSIGTFII, LLLTDSFFSMSGMIFPIISAY, ILWYWIYVFLGIIYFLIFILT, IILLSISALLYILGQLSFISW, VLVSNFWMAYMIGMWCFSFII, MFIFLTGSSSVLMYCFIYSKS, IISLGFFSSAIYTIIITLASL, LILFFGTIGTLLTFIITSPIV, and TTLIFSNVLYVIVFFLSCIIF.

The protein belongs to the major facilitator superfamily. TsgA family.

Its subcellular location is the cell membrane. The polypeptide is Protein TsgA homolog (Buchnera aphidicola subsp. Schizaphis graminum (strain Sg)).